A 407-amino-acid polypeptide reads, in one-letter code: Dephospho-CoA kinase (407 aa).

In terms of domain architecture, DPCK spans 3–201 (RIGLTGGIGA…ERIVPFAHNL (199 aa)). Residue 11–16 (GAGKSA) coordinates ATP. The interval 196-407 (PFAHNLSTRQ…DWADSTGWKP (212 aa)) is UPF0157.

In the N-terminal section; belongs to the CoaE family. It in the C-terminal section; belongs to the UPF0157 (GrpB) family.

The protein resides in the cytoplasm. It catalyses the reaction 3'-dephospho-CoA + ATP = ADP + CoA + H(+). It functions in the pathway cofactor biosynthesis; coenzyme A biosynthesis; CoA from (R)-pantothenate: step 5/5. Catalyzes the phosphorylation of the 3'-hydroxyl group of dephosphocoenzyme A to form coenzyme A. This chain is Dephospho-CoA kinase, found in Mycolicibacterium paratuberculosis (strain ATCC BAA-968 / K-10) (Mycobacterium paratuberculosis).